The following is a 287-amino-acid chain: Inositol diphosphatase siw14 (287 aa).

One can recognise a Tyrosine-protein phosphatase domain in the interval 85 to 256; it reads NFGVVYPGII…LNDLKRYISD (172 aa). A phosphoserine mark is found at Ser156 and Ser159. The Phosphocysteine intermediate role is filled by Cys189.

Belongs to the protein-tyrosine phosphatase family. Atypical dual-specificity phosphatase Siw14-like subfamily.

The protein resides in the cytoplasm. It localises to the nucleus. It catalyses the reaction 5-diphospho-1D-myo-inositol 1,2,3,4,6-pentakisphosphate + H2O = 1D-myo-inositol hexakisphosphate + phosphate + H(+). It carries out the reaction 1-diphospho-1D-myo-inositol 2,3,4,5,6-pentakisphosphate + H2O = 1D-myo-inositol hexakisphosphate + phosphate + H(+). The enzyme catalyses 1,5-bis(diphospho)-1D-myo-inositol 2,3,4,6-tetrakisphosphate + H2O = 1-diphospho-1D-myo-inositol 2,3,4,5,6-pentakisphosphate + phosphate + 2 H(+). With respect to regulation, activity is inhibited by the reaction product inorganic phosphate and by sulfate (a phosphate mimetic). Not inhibited by magnesium. In terms of biological role, cleaves the beta-phosphate at the 1- and 5-position of soluble inositol pyrophosphates. Has exopolyphosphatase activity in vitro but does not appear to contribute to the homeostasis of cellular polyphosphate. The chain is Inositol diphosphatase siw14 from Schizosaccharomyces pombe (strain 972 / ATCC 24843) (Fission yeast).